Here is a 644-residue protein sequence, read N- to C-terminus: Exoribonuclease 2 (644 aa).

The region spanning 189–516 (REDLTALDFV…NHRLLKAVIK (328 aa)) is the RNB domain. The 83-residue stretch at 561-643 (DTRFAAEIVD…ETRSIIARPV (83 aa)) folds into the S1 motif domain.

It belongs to the RNR ribonuclease family. RNase II subfamily.

Its subcellular location is the cytoplasm. The catalysed reaction is Exonucleolytic cleavage in the 3'- to 5'-direction to yield nucleoside 5'-phosphates.. Involved in mRNA degradation. Hydrolyzes single-stranded polyribonucleotides processively in the 3' to 5' direction. The chain is Exoribonuclease 2 from Escherichia coli O17:K52:H18 (strain UMN026 / ExPEC).